The sequence spans 343 residues: TATA box-binding protein-like 2 (343 aa).

The tract at residues 71–152 is disordered; that stretch reads PDEVTQENKD…SDSLSLASIT (82 aa). The span at 76-90 shows a compositional bias: basic and acidic residues; it reads QENKDQPVISKHETE. Low complexity predominate over residues 94 to 127; that stretch reads ESQSPQSRLPSPSEQDVGLGLNSSSLSNSHSQLH. The span at 143–152 shows a compositional bias: polar residues; the sequence is SDSLSLASIT.

This sequence belongs to the TBP family. Interacts with TAF3. As to expression, ubiquitously expressed in all tissues examined with highest levels in heart, lung, ovary, spleen and testes.

It localises to the cytoplasm. It is found in the nucleus. In terms of biological role, transcription factor required in complex with TAF3 for the differentiation of myoblasts into myocytes. The complex replaces TFIID at specific promoters at an early stage in the differentiation process. This chain is TATA box-binding protein-like 2, found in Homo sapiens (Human).